Reading from the N-terminus, the 402-residue chain is Cysteine desulfurase NifS (402 aa).

Residues 72 to 73 (GT), Asn151, Gln179, and 199 to 201 (CGH) each bind pyridoxal 5'-phosphate. N6-(pyridoxal phosphate)lysine is present on Lys202. Pyridoxal 5'-phosphate is bound at residue Thr237. Cys325 (cysteine persulfide intermediate) is an active-site residue. Cys325 contributes to the [2Fe-2S] cluster binding site.

It belongs to the class-V pyridoxal-phosphate-dependent aminotransferase family. NifS/IscS subfamily. As to quaternary structure, homodimer. Pyridoxal 5'-phosphate serves as cofactor.

It catalyses the reaction (sulfur carrier)-H + L-cysteine = (sulfur carrier)-SH + L-alanine. Inhibited by equimolar concentrations of p-chloromercuribenzoic acid, iodoacetamide or N-ethylmaleimide. Functionally, catalyzes the removal of elemental sulfur atoms from cysteine to produce alanine. Seems to participate in the biosynthesis of the nitrogenase metalloclusters by providing the inorganic sulfur required for the Fe-S core formation. This is Cysteine desulfurase NifS from Azotobacter vinelandii.